The sequence spans 525 residues: Cytochrome P450 4V2 (525 aa).

A helical transmembrane segment spans residues 13-33; the sequence is LLLWGAASALSLAGASLVLSL. Heme contacts are provided by E329 and C467.

This sequence belongs to the cytochrome P450 family. Heme is required as a cofactor. In terms of tissue distribution, broadly expressed. Detected in heart, brain, placenta, lung, liver, skeletal muscle, kidney, pancreas, retina, retinal pigment epithelium (RPE) and lymphocytes.

The protein localises to the endoplasmic reticulum membrane. It carries out the reaction dodecanoate + reduced [NADPH--hemoprotein reductase] + O2 = 12-hydroxydodecanoate + oxidized [NADPH--hemoprotein reductase] + H2O + H(+). It catalyses the reaction tetradecanoate + reduced [NADPH--hemoprotein reductase] + O2 = 14-hydroxytetradecanoate + oxidized [NADPH--hemoprotein reductase] + H2O + H(+). The catalysed reaction is hexadecanoate + reduced [NADPH--hemoprotein reductase] + O2 = 16-hydroxyhexadecanoate + oxidized [NADPH--hemoprotein reductase] + H2O + H(+). The enzyme catalyses (5Z,8Z,11Z,14Z,17Z)-eicosapentaenoate + reduced [NADPH--hemoprotein reductase] + O2 = 20-hydroxy-(5Z,8Z,11Z,14Z,17Z)-eicosapentaenoate + oxidized [NADPH--hemoprotein reductase] + H2O + H(+). It carries out the reaction (4Z,7Z,10Z,13Z,16Z,19Z)-docosahexaenoate + reduced [NADPH--hemoprotein reductase] + O2 = 22-hydroxy-(4Z,7Z,10Z,13Z,16Z,19Z)-docosahexaenoate + oxidized [NADPH--hemoprotein reductase] + H2O + H(+). Its pathway is lipid metabolism; fatty acid metabolism. Its activity is regulated as follows. Inhibited by N-hydroxy-N'-(4-n-butyl-2-methylphenyl formamidine)(HET0016) with an IC(50) of 38 nM. A cytochrome P450 monooxygenase involved in fatty acid metabolism in the eye. Catalyzes the omega-hydroxylation of polyunsaturated fatty acids (PUFAs) docosahexaenoate (DHA) and its precursor eicosapentaenoate (EPA), and may contribute to the homeostasis of these retinal PUFAs. Omega hydroxylates saturated fatty acids such as laurate, myristate and palmitate, the catalytic efficiency decreasing in the following order: myristate &gt; laurate &gt; palmitate (C14&gt;C12&gt;C16). Mechanistically, uses molecular oxygen inserting one oxygen atom into a substrate, and reducing the second into a water molecule, with two electrons provided by NADPH via cytochrome P450 reductase (CPR; NADPH-ferrihemoprotein reductase). The protein is Cytochrome P450 4V2 (CYP4V2) of Homo sapiens (Human).